Reading from the N-terminus, the 598-residue chain is Elongation factor 4 (598 aa).

The region spanning 3–185 is the tr-type G domain; that stretch reads QHIRNFSIIA…MIVARIPPPE (183 aa). Residues 15 to 20 and 132 to 135 contribute to the GTP site; these read DHGKST and NKID.

Belongs to the TRAFAC class translation factor GTPase superfamily. Classic translation factor GTPase family. LepA subfamily.

The protein resides in the cell inner membrane. The enzyme catalyses GTP + H2O = GDP + phosphate + H(+). Its function is as follows. Required for accurate and efficient protein synthesis under certain stress conditions. May act as a fidelity factor of the translation reaction, by catalyzing a one-codon backward translocation of tRNAs on improperly translocated ribosomes. Back-translocation proceeds from a post-translocation (POST) complex to a pre-translocation (PRE) complex, thus giving elongation factor G a second chance to translocate the tRNAs correctly. Binds to ribosomes in a GTP-dependent manner. In Nitrosomonas eutropha (strain DSM 101675 / C91 / Nm57), this protein is Elongation factor 4.